Reading from the N-terminus, the 142-residue chain is Large ribosomal subunit protein uL13 (142 aa).

The protein belongs to the universal ribosomal protein uL13 family. As to quaternary structure, part of the 50S ribosomal subunit.

Its function is as follows. This protein is one of the early assembly proteins of the 50S ribosomal subunit, although it is not seen to bind rRNA by itself. It is important during the early stages of 50S assembly. The sequence is that of Large ribosomal subunit protein uL13 from Stutzerimonas stutzeri (strain A1501) (Pseudomonas stutzeri).